The following is an 86-amino-acid chain: CLAVATA3/ESR (CLE)-related protein 8 (86 aa).

The first 24 residues, 1–24 (MKVLKRDSMLLLITLYFLLTTSMA), serve as a signal peptide directing secretion. The segment at 43-86 (DLKQNKAKPHLPNLFRTMRRVPTGPNPLHHISPPQPGSLNYARN) is disordered. Pro-64 and Pro-67 each carry hydroxyproline. O-linked (Ara...) hydroxyproline glycosylation is present at Pro-67.

It belongs to the CLV3/ESR signal peptide family. In terms of processing, the O-glycosylation (arabinosylation) of the hydroxyproline Pro-67 enhances binding affinity of the CLE8p peptide for its receptor. In terms of tissue distribution, mostly expressed in siliques, and, to a lower extent, in flowers. Expressed in young embryos and endosperm.

Its subcellular location is the secreted. It localises to the extracellular space. Extracellular signal peptide that regulates cell fate. Represses root apical meristem maintenance. Positively regulates the expression of the transcription factor WOX8 and thus, regulates early embryo development. Regulates the transition of protophloem cells from proliferation to differentiation, thus impinging on postembryonic growth capacity of the root meristem; this signaling pathway requires CRN and CLV2. The chain is CLAVATA3/ESR (CLE)-related protein 8 from Arabidopsis thaliana (Mouse-ear cress).